A 117-amino-acid chain; its full sequence is Photosystem II reaction center Psb28 protein (117 aa).

Belongs to the Psb28 family. Part of the photosystem II complex.

It is found in the cellular thylakoid membrane. The sequence is that of Photosystem II reaction center Psb28 protein from Prochlorococcus marinus (strain MIT 9515).